The primary structure comprises 688 residues: Translation initiation factor IF-2 (688 aa).

A disordered region spans residues 54–95 (KEKSEKTKEEDDEIETTAKNPIKESTNNKKPNKRDDKNEKVN). A compositionally biased stretch (basic and acidic residues) spans 86-95 (KRDDKNEKVN). The tr-type G domain occupies 187–354 (KRSPIITVMG…MILLSSEILE (168 aa)). The segment at 196 to 203 (GHVDHGKT) is G1. GTP is bound at residue 196 to 203 (GHVDHGKT). Residues 221–225 (GITQH) are G2. The G3 stretch occupies residues 242 to 245 (DTPG). Residues 242 to 246 (DTPGH) and 296 to 299 (NKID) each bind GTP. The segment at 296 to 299 (NKID) is G4. A G5 region spans residues 332–334 (SAH).

Belongs to the TRAFAC class translation factor GTPase superfamily. Classic translation factor GTPase family. IF-2 subfamily.

The protein localises to the cytoplasm. In terms of biological role, one of the essential components for the initiation of protein synthesis. Protects formylmethionyl-tRNA from spontaneous hydrolysis and promotes its binding to the 30S ribosomal subunits. Also involved in the hydrolysis of GTP during the formation of the 70S ribosomal complex. In Clostridium botulinum (strain Okra / Type B1), this protein is Translation initiation factor IF-2.